We begin with the raw amino-acid sequence, 177 residues long: uncharacterized protein (177 aa).

Positions 10–177 constitute an N-acetyltransferase domain; that stretch reads LILRQITDQD…NVYSIVKPRE (168 aa).

It belongs to the acetyltransferase family.

This is an uncharacterized protein from Bacillus subtilis (strain 168).